The primary structure comprises 577 residues: Arginine--tRNA ligase (577 aa).

Positions 122–132 (PNVAKEMHVGH) match the 'HIGH' region motif.

The protein belongs to the class-I aminoacyl-tRNA synthetase family. In terms of assembly, monomer.

Its subcellular location is the cytoplasm. The catalysed reaction is tRNA(Arg) + L-arginine + ATP = L-arginyl-tRNA(Arg) + AMP + diphosphate. The chain is Arginine--tRNA ligase from Klebsiella pneumoniae subsp. pneumoniae (strain ATCC 700721 / MGH 78578).